The primary structure comprises 291 residues: Flap endonuclease (291 aa).

The interval 82-116 (YKGNRDEKYAQRTEEEKALDEQFFEYLKDAFELCK) is helical arch. Lys83 provides a ligand contact to DNA. Positions 130, 153, 155, and 201 each coordinate Mg(2+). Residues 188 to 224 (DVEQFISLKAIMGDLGDNIRGVEGIGAKRGYNIIREF) form a DNA-binding; H3TH region. A 5'-3' exonuclease domain is found at 190–263 (EQFISLKAIM…FRNLILVDLP (74 aa)). The K(+) site is built by Val209 and Ile212.

The cofactor is Mg(2+). It depends on K(+) as a cofactor.

The enzyme catalyses Exonucleolytic cleavage in the 5'- to 3'-direction to yield nucleoside 5'-phosphates.. Its activity is regulated as follows. Inhibited by p-hydroxymercuribenzoate (PHMB). Functionally, catalyzes both the 5'-exonucleolytic and structure-specific endonucleolytic hydrolysis of DNA branched nucleic acid molecules and probably plays a role in viral genome replication. Active on flap (branched duplex DNA containing a free single-stranded 5'-end), 5'overhangs and pseudo-Y structures. The substrates require a free, single-stranded 5' end, with endonucleolytic hydrolysis occurring at the junction of double- and single-stranded DNA. This function may be used for example to trim such branched molecules generated by Okazaki fragments synthesis during replication. This Escherichia phage T5 (Enterobacteria phage T5) protein is Flap endonuclease (D15).